The following is a 396-amino-acid chain: 1-deoxy-D-xylulose 5-phosphate reductoisomerase (396 aa).

NADPH-binding residues include Thr13, Gly14, Ser15, Ile16, and Asn127. Lys128 contributes to the 1-deoxy-D-xylulose 5-phosphate binding site. Glu129 is a binding site for NADPH. Asp153 serves as a coordination point for Mn(2+). 1-deoxy-D-xylulose 5-phosphate is bound by residues Ser154, Glu155, Ser184, and His207. Glu155 provides a ligand contact to Mn(2+). Residue Gly213 participates in NADPH binding. 4 residues coordinate 1-deoxy-D-xylulose 5-phosphate: Ser220, Asn225, Lys226, and Glu229. Glu229 lines the Mn(2+) pocket.

The protein belongs to the DXR family. Requires Mg(2+) as cofactor. Mn(2+) serves as cofactor.

It carries out the reaction 2-C-methyl-D-erythritol 4-phosphate + NADP(+) = 1-deoxy-D-xylulose 5-phosphate + NADPH + H(+). It participates in isoprenoid biosynthesis; isopentenyl diphosphate biosynthesis via DXP pathway; isopentenyl diphosphate from 1-deoxy-D-xylulose 5-phosphate: step 1/6. Inhibited by fosmidomycin and 3-(N-acetyl-N-hydroxyamino)-propylphosphonic acid (FR-900098). In terms of biological role, catalyzes the NADPH-dependent rearrangement and reduction of 1-deoxy-D-xylulose-5-phosphate (DXP) to 2-C-methyl-D-erythritol 4-phosphate (MEP). The chain is 1-deoxy-D-xylulose 5-phosphate reductoisomerase from Pseudomonas aeruginosa (strain ATCC 15692 / DSM 22644 / CIP 104116 / JCM 14847 / LMG 12228 / 1C / PRS 101 / PAO1).